A 353-amino-acid polypeptide reads, in one-letter code: S-adenosylmethionine:tRNA ribosyltransferase-isomerase (353 aa).

Belongs to the QueA family. In terms of assembly, monomer.

It localises to the cytoplasm. The enzyme catalyses 7-aminomethyl-7-carbaguanosine(34) in tRNA + S-adenosyl-L-methionine = epoxyqueuosine(34) in tRNA + adenine + L-methionine + 2 H(+). Its pathway is tRNA modification; tRNA-queuosine biosynthesis. Transfers and isomerizes the ribose moiety from AdoMet to the 7-aminomethyl group of 7-deazaguanine (preQ1-tRNA) to give epoxyqueuosine (oQ-tRNA). The polypeptide is S-adenosylmethionine:tRNA ribosyltransferase-isomerase (Rickettsia bellii (strain OSU 85-389)).